Here is a 132-residue protein sequence, read N- to C-terminus: Large ribosomal subunit protein bL19 (132 aa).

Belongs to the bacterial ribosomal protein bL19 family.

Functionally, this protein is located at the 30S-50S ribosomal subunit interface and may play a role in the structure and function of the aminoacyl-tRNA binding site. The protein is Large ribosomal subunit protein bL19 of Methylobacterium radiotolerans (strain ATCC 27329 / DSM 1819 / JCM 2831 / NBRC 15690 / NCIMB 10815 / 0-1).